An 819-amino-acid polypeptide reads, in one-letter code: MSDVVLLVLAIILITIFTLIYYTIFFEFDETTFSKRLQVLTEYAKRTNADKPTPDVLGHVSDVYDHTYIVSWFKTDDLSTYHETVHDDTVEVFDFLEQRFAAAAAAVAHRVAPLAAEPDAFVVTGDAGDVKLRCPQHFRFDYDQLKCVPVDPCAGRAPGRYPMDERLLDTLVHNQPSDKDYSAGEHLHHPTLYLRCLADGSHAVRECPDNYTFDAASGECRVNELCEGRPDGFVLAYFPETLRVNEFVECRGGKHVVARCPDQQVFDRALMTCVQTHPCAFNGAGHTYITADIGDAQFFKCLNDREAQLITCINRVRGADGQYACSGDARCADLPDGTGRLMHTHTDDTFEYVSGQTICDNYNVISEIECDTGNVLENKLFVNKFTLGAQFPREVLDAGVCAPATLNNVRVLSDAFPVENLPNDYKVDMQTSVVGLATMMADLTTGADPDTAFGQNVLLAREVDAVGLSPLTAESIDCFGARLFDVMDARRANVCTESGGDLLRTIEFGDGAFLSVFRDDLTGSDADYKQFCAISYESPLKIVNSDHFERRILANILQADICAELYTTIYQKYTTLARKYTTASPKYNYTFVKRPPNIVVYAENTHLKNSTISVPTFDPFAPQPADNKIGPTNALFDPFADRVWRSEPGGDGDHWAPEAPPTQPEAPPAPEPSPLILDKKELFYSCYYELPTFKLTSCHAENDVIIDALQQLRAAVEVDPGCEPAKDLHFVLNAYAYMGNGVGCRSVFDGNNVTVIKEPVPTYTFNNLQTQSDDGVRYNKHVHVKDGRYMACPEHLYDGAAFACNAEPDKLYYLDNMQK.

A signal peptide spans 1-18; that stretch reads MSDVVLLVLAIILITIFT. A C2HC BV-type zinc finger spans residues 147–196; it reads CVPVDPCAGRAPGRYPMDERLLDTLVHNQPSDKDYSAGEHLHHPTLYLRC. 2 disulfides stabilise this stretch: C207-C220 and C260-C273. N210 carries N-linked (GlcNAc...) asparagine; by host glycosylation. One can recognise a Chitin-binding type-2 domain in the interval 223 to 281; that stretch reads NELCEGRPDGFVLAYFPETLRVNEFVECRGGKHVVARCPDQQVFDRALMTCVQTHPCAF. N588 and N609 each carry an N-linked (GlcNAc...) asparagine; by host glycan. The segment at 650-671 is disordered; that stretch reads GDGDHWAPEAPPTQPEAPPAPE. Residues 658–671 are compositionally biased toward pro residues; the sequence is EAPPTQPEAPPAPE. N752 carries an N-linked (GlcNAc...) asparagine; by host glycan.

Its subcellular location is the virion. Probable capsid-associated protein. In Orgyia pseudotsugata (Douglas-fir tussock moth), this protein is Capsid-associated protein Vp91 (p91).